We begin with the raw amino-acid sequence, 90 residues long: Protein P18 (90 aa).

Helical transmembrane passes span 1–21, 37–57, and 60–80; these read MPFGLIVIGIILAIAAYRDTL, GFGYWVLAAVILGFAASIKPI, and PVNAFMILLMIVLLIRKRGAI.

Its subcellular location is the virion membrane. Its function is as follows. Component of the phage injection machinery. Required for DNA injection in the membrane transformation event. Involved in the formation of the membrane tail tube to connect the virus interior with the host cytosol. Essential for viral infectivity. The protein is Protein P18 (XVIII) of Acinetobacter calcoaceticus (Arthrobacter siderocapsulatus).